The sequence spans 75 residues: Large ribosomal subunit protein bL31 (75 aa).

4 residues coordinate Zn(2+): cysteine 16, cysteine 18, cysteine 36, and cysteine 39.

Belongs to the bacterial ribosomal protein bL31 family. Type A subfamily. In terms of assembly, part of the 50S ribosomal subunit. The cofactor is Zn(2+).

Binds the 23S rRNA. The sequence is that of Large ribosomal subunit protein bL31 from Desulforapulum autotrophicum (strain ATCC 43914 / DSM 3382 / VKM B-1955 / HRM2) (Desulfobacterium autotrophicum).